A 1285-amino-acid polypeptide reads, in one-letter code: MEVSPAIARYFEELEGELDAAIRLAAAARARGLDPRTEIEIPVASDLADRVEALLGYKGIAARIRELEAEMSREEAALRIGDDFAARKFGETTPEEILDHAIRAAMALLTEGVVAAPTEGIGKVSLGKNDDGTDYLKIYYAGPIRSAGGTAQALSVLVGDYVRQALGINRYIPRPEEVERYIEEIRQYNNIMSLQYLPSEKELRMIIENCPVCIDGEPTEQQEVSGYRNLERVETNTVRGGMALVVAEGLALKAPKVLKNVRKMKMEGWDWIEEMIGGGPKSDDDDASAAIKPKDKYIRDLIGGRPVFSYPMRKGGFRLRLGRARNTGFAAAGFNPATLHILGDFLAVGTQMKVERPGKAAGVVPVDSIQGPTVKLRSGEVRRVDDAAEARRLAGQVDEILDVGEMLVSFGEFMENNHPLMPPAYCEEWWMLEGGPRHPENELEAIEFALDGVPLHPDYTYMWDDVAPADIARLAEAVGTGGTVEDGVLMIRNTPETKAILEELLIPHHLSGDRLAIREHLAFLACLGLTLQLTKRPAWQDAPMENSLDLVMHLSGFTVRSRAGTRIGGRMGRPGKSKPREMRPPPHSLFPIGDEGGARRSFQAACSSKPRSNTDGGVIEAEVGERQCPACGAFTYKNLCECGAHTNPVFRCPRCGKDVGQDVCPRCNAETVCLQKVTINVKAEYLAAMESLGVRESSVALLKGVKGLISRERPVEPIEKGILRALQNLYVFKDGTVRYDMIDLPLTHFRPDEVGVPIERLRELGYTHDTYGRELVSDDQVLELRHQDILVSEGCGEWLVRVAKFVDDLLVRLYGLEPFYKAEKPLDLVGHLLMGLAPHTSAGVLVRLIGFSKAPVGYGHPFFHAAKRRNCFAGDTEITVSDGRRWMSLPIRQFVTENFDISKPGLDHVGTFYSDPRQPFYVRSIDSQGKTSLKRVTSVSVHRAPAHLVRFATRRGRVLTVTPDHAMLVWDTDYLRKIKALEVAVGDRVPVEEGGLVVADEVVSRETVQALDDRVYCLTVAENHTLVANGIFCGQCDGDEDCVMLLLDGLINFSRAYLPETRGGTMDAPLVLTTRIDPSEVDKESHNVDVCDHYPIEVYNGCLAYAHPKDLDAFVDRVERRLGTPAQCEGFLFTHQTSNISAGPLESTYTRLGSMLDKLEAELDLAKRIRAVDEDDVAERVLNTHFIRDLQGNLNAFSKQKVRCMKCNAKYRRMPLAGKCTRCGGHVIPTVHEGSVKKYLEMSRNICATYAISDYTKQRVEVLFMQIESTFGEPPEKQLGLADFM.

Residues 565–586 (TRIGGRMGRPGKSKPREMRPPP) are disordered.

Belongs to the archaeal DNA polymerase II family. As to quaternary structure, heterodimer of a large subunit and a small subunit. In terms of processing, this protein undergoes a protein self splicing that involves a post-translational excision of the intervening region (intein) followed by peptide ligation.

It catalyses the reaction DNA(n) + a 2'-deoxyribonucleoside 5'-triphosphate = DNA(n+1) + diphosphate. The catalysed reaction is Exonucleolytic cleavage in the 3'- to 5'-direction to yield nucleoside 5'-phosphates.. In terms of biological role, possesses two activities: a DNA synthesis (polymerase) and an exonucleolytic activity that degrades single-stranded DNA in the 3'- to 5'-direction. Has a template-primer preference which is characteristic of a replicative DNA polymerase. The sequence is that of DNA polymerase II large subunit from Methanoculleus marisnigri (strain ATCC 35101 / DSM 1498 / JR1).